A 738-amino-acid polypeptide reads, in one-letter code: Melanotransferrin (738 aa).

The N-terminal stretch at 1 to 19 (MRGPSGALWLLLALRTVLG) is a signal peptide. The tract at residues 20 to 30 (GMEVRWCATSD) is antigenic epitope. Transferrin-like domains lie at 23–357 (VRWC…GLLC) and 366–706 (LRWC…GMSS). 2 disulfides stabilise this stretch: Cys26–Cys63 and Cys36–Cys54. Asn38 carries an N-linked (GlcNAc...) asparagine glycan. Fe(3+)-binding residues include Asp78 and Tyr107. 4 cysteine pairs are disulfide-bonded: Cys130–Cys216, Cys172–Cys189, Cys186–Cys199, and Cys257–Cys271. Thr132 serves as a coordination point for hydrogencarbonate. N-linked (GlcNAc...) asparagine glycosylation occurs at Asn135. Hydrogencarbonate is bound by residues Arg136, Val138, and Gly139. Tyr210 contributes to the Fe(3+) binding site. His279, Ser421, and Tyr451 together coordinate Fe(3+). Phosphoserine; by FAM20C is present on Ser462. Asn515 carries N-linked (GlcNAc...) asparagine glycosylation. Residues Tyr556 and His625 each contribute to the Fe(3+) site. Cys709 carries GPI-anchor amidated cysteine lipidation. A propeptide spans 710 to 738 (SGAAAPAPGAPLLPLLLPALAARLLPPAL) (removed in mature form).

This sequence belongs to the transferrin family. In terms of tissue distribution, found predominantly in human melanomas and in certain fetal tissues; also found in liver, epithelium, umbilical chord, placenta and sweat gland ducts.

Its subcellular location is the cell membrane. In terms of biological role, involved in iron cellular uptake. Seems to be internalized and then recycled back to the cell membrane. Binds a single atom of iron per subunit. Could also bind zinc. The sequence is that of Melanotransferrin from Homo sapiens (Human).